A 561-amino-acid chain; its full sequence is Liver carboxylesterase 1F (561 aa).

A signal peptide spans 1–18 (MCLSFLFLVSLATCVVYG). The N-linked (GlcNAc...) asparagine glycan is linked to N79. A disulfide bridge links C87 with C116. The Acyl-ester intermediate role is filled by S221. C273 and C284 are disulfide-bonded. Active-site charge relay system residues include E353 and H466. A Prevents secretion from ER motif is present at residues 558 to 561 (HNEL).

This sequence belongs to the type-B carboxylesterase/lipase family. Expressed in liver and kidney.

It localises to the lipid droplet. The protein resides in the cytoplasm. Its subcellular location is the cytosol. It is found in the endoplasmic reticulum. The protein localises to the microsome. It carries out the reaction a carboxylic ester + H2O = an alcohol + a carboxylate + H(+). The enzyme catalyses all-trans-retinyl hexadecanoate + H2O = all-trans-retinol + hexadecanoate + H(+). Involved in the detoxification of xenobiotics and in the activation of ester and amide prodrugs. Hydrolyzes retinyl esters. Hydrolyzes p-nitrophenyl butyrate (PNPB), triacylglycerol and monoacylglycerol. Shows higher activity against PNPB, a short-chain fatty acid ester, than against triolein, a long-chain fatty acid ester. Shows no detectable activity against diacylglycerol, cholesterol ester or phospholipids. May play a role in adipocyte lipolysis. The polypeptide is Liver carboxylesterase 1F (Rattus norvegicus (Rat)).